A 141-amino-acid chain; its full sequence is Galactose-6-phosphate isomerase subunit LacA 1 (141 aa).

The protein belongs to the LacAB/RpiB family. As to quaternary structure, heteromultimeric protein consisting of LacA and LacB.

It catalyses the reaction aldehydo-D-galactose 6-phosphate = keto-D-tagatose 6-phosphate. It functions in the pathway carbohydrate metabolism; D-galactose 6-phosphate degradation; D-tagatose 6-phosphate from D-galactose 6-phosphate: step 1/1. The protein is Galactose-6-phosphate isomerase subunit LacA 1 of Streptococcus pyogenes serotype M6 (strain ATCC BAA-946 / MGAS10394).